We begin with the raw amino-acid sequence, 96 residues long: Muconolactone Delta-isomerase (96 aa).

The protein belongs to the muconolactone Delta-isomerase family. In terms of assembly, homodecamer.

The enzyme catalyses (S)-muconolactone = (4,5-dihydro-5-oxofuran-2-yl)-acetate. Its pathway is aromatic compound metabolism; beta-ketoadipate pathway; 5-oxo-4,5-dihydro-2-furylacetate from catechol: step 3/3. The polypeptide is Muconolactone Delta-isomerase (catC) (Pseudomonas putida (Arthrobacter siderocapsulatus)).